The sequence spans 92 residues: YcgL domain-containing protein Sama_1929 (92 aa).

The YcgL domain occupies Met1–Arg85.

This chain is YcgL domain-containing protein Sama_1929, found in Shewanella amazonensis (strain ATCC BAA-1098 / SB2B).